Consider the following 397-residue polypeptide: Tryptophan synthase beta chain (397 aa).

N6-(pyridoxal phosphate)lysine is present on lysine 91.

It belongs to the TrpB family. As to quaternary structure, tetramer of two alpha and two beta chains. Requires pyridoxal 5'-phosphate as cofactor.

The enzyme catalyses (1S,2R)-1-C-(indol-3-yl)glycerol 3-phosphate + L-serine = D-glyceraldehyde 3-phosphate + L-tryptophan + H2O. It participates in amino-acid biosynthesis; L-tryptophan biosynthesis; L-tryptophan from chorismate: step 5/5. The beta subunit is responsible for the synthesis of L-tryptophan from indole and L-serine. This chain is Tryptophan synthase beta chain, found in Bacillus cereus (strain G9842).